The primary structure comprises 272 residues: Shikimate dehydrogenase (NADP(+)) (272 aa).

Shikimate contacts are provided by residues Ser-14 to Ser-16 and Thr-61. Lys-65 (proton acceptor) is an active-site residue. Glu-77 contacts NADP(+). Asn-86 and Asp-102 together coordinate shikimate. NADP(+) is bound by residues Gly-126 to Ala-130, Asn-149 to Arg-154, and Met-213. Residue Tyr-215 participates in shikimate binding. An NADP(+)-binding site is contributed by Gly-237.

It belongs to the shikimate dehydrogenase family. As to quaternary structure, homodimer.

The enzyme catalyses shikimate + NADP(+) = 3-dehydroshikimate + NADPH + H(+). The protein operates within metabolic intermediate biosynthesis; chorismate biosynthesis; chorismate from D-erythrose 4-phosphate and phosphoenolpyruvate: step 4/7. In terms of biological role, involved in the biosynthesis of the chorismate, which leads to the biosynthesis of aromatic amino acids. Catalyzes the reversible NADPH linked reduction of 3-dehydroshikimate (DHSA) to yield shikimate (SA). The sequence is that of Shikimate dehydrogenase (NADP(+)) from Escherichia coli O157:H7.